Reading from the N-terminus, the 98-residue chain is Large ribosomal subunit protein uL23 (98 aa).

This sequence belongs to the universal ribosomal protein uL23 family. In terms of assembly, part of the 50S ribosomal subunit. Contacts protein L29, and trigger factor when it is bound to the ribosome.

One of the early assembly proteins it binds 23S rRNA. One of the proteins that surrounds the polypeptide exit tunnel on the outside of the ribosome. Forms the main docking site for trigger factor binding to the ribosome. The polypeptide is Large ribosomal subunit protein uL23 (Clostridium acetobutylicum (strain ATCC 824 / DSM 792 / JCM 1419 / IAM 19013 / LMG 5710 / NBRC 13948 / NRRL B-527 / VKM B-1787 / 2291 / W)).